The chain runs to 398 residues: Phosphoglycerate kinase (398 aa).

Substrate-binding positions include 23–25, Arg-38, 61–64, Arg-122, and Arg-155; these read DFN and HMGK. Residues Lys-206, Gly-297, Glu-328, and 354-357 each bind ATP; that span reads GGDS.

It belongs to the phosphoglycerate kinase family. As to quaternary structure, monomer.

The protein resides in the cytoplasm. The enzyme catalyses (2R)-3-phosphoglycerate + ATP = (2R)-3-phospho-glyceroyl phosphate + ADP. It functions in the pathway carbohydrate degradation; glycolysis; pyruvate from D-glyceraldehyde 3-phosphate: step 2/5. In Clostridium botulinum (strain Langeland / NCTC 10281 / Type F), this protein is Phosphoglycerate kinase.